A 509-amino-acid polypeptide reads, in one-letter code: Type II methyltransferase M.BsoBI (509 aa).

The protein belongs to the N(4)/N(6)-methyltransferase family. N(4) subfamily.

The enzyme catalyses a 2'-deoxycytidine in DNA + S-adenosyl-L-methionine = an N(4)-methyl-2'-deoxycytidine in DNA + S-adenosyl-L-homocysteine + H(+). An alpha subtype methylase that recognizes the double-stranded sequence 5'-CYCGRG-3', methylates C-1 on both strands, and protects the DNA from cleavage by the BsoBI endonuclease. The polypeptide is Type II methyltransferase M.BsoBI (Geobacillus stearothermophilus (Bacillus stearothermophilus)).